Reading from the N-terminus, the 432-residue chain is Serine hydroxymethyltransferase (432 aa).

(6S)-5,6,7,8-tetrahydrofolate is bound by residues Leu-127 and 131-133; that span reads GHL. Residue Lys-236 is modified to N6-(pyridoxal phosphate)lysine.

Belongs to the SHMT family. In terms of assembly, homodimer. Requires pyridoxal 5'-phosphate as cofactor.

It localises to the cytoplasm. It catalyses the reaction (6R)-5,10-methylene-5,6,7,8-tetrahydrofolate + glycine + H2O = (6S)-5,6,7,8-tetrahydrofolate + L-serine. Its pathway is one-carbon metabolism; tetrahydrofolate interconversion. It functions in the pathway amino-acid biosynthesis; glycine biosynthesis; glycine from L-serine: step 1/1. Catalyzes the reversible interconversion of serine and glycine with tetrahydrofolate (THF) serving as the one-carbon carrier. This reaction serves as the major source of one-carbon groups required for the biosynthesis of purines, thymidylate, methionine, and other important biomolecules. Also exhibits THF-independent aldolase activity toward beta-hydroxyamino acids, producing glycine and aldehydes, via a retro-aldol mechanism. This is Serine hydroxymethyltransferase from Rhizobium rhizogenes (strain K84 / ATCC BAA-868) (Agrobacterium radiobacter).